A 512-amino-acid polypeptide reads, in one-letter code: Ribose import ATP-binding protein RbsA 1 (512 aa).

ABC transporter domains are found at residues 8 to 244 and 254 to 502; these read FRME…IGRE and AHRG…LNIA. 40–47 serves as a coordination point for ATP; that stretch reads GENGAGKS.

This sequence belongs to the ABC transporter superfamily. Ribose importer (TC 3.A.1.2.1) family. In terms of assembly, the complex is composed of an ATP-binding protein (RbsA), two transmembrane proteins (RbsC) and a solute-binding protein (RbsB).

The protein localises to the cell inner membrane. The enzyme catalyses D-ribose(out) + ATP + H2O = D-ribose(in) + ADP + phosphate + H(+). In terms of biological role, part of the ABC transporter complex RbsABC involved in ribose import. Responsible for energy coupling to the transport system. The polypeptide is Ribose import ATP-binding protein RbsA 1 (Rhizobium johnstonii (strain DSM 114642 / LMG 32736 / 3841) (Rhizobium leguminosarum bv. viciae)).